The primary structure comprises 125 residues: uncharacterized protein (125 aa).

The protein belongs to the asfivirus B125R family.

This is an uncharacterized protein from Ornithodoros (relapsing fever ticks).